Consider the following 72-residue polypeptide: Penaeidin-2b (72 aa).

The signal sequence occupies residues 1-21 (MRLVVCLVFLASFALVCQGEA). Disulfide bonds link Cys45/Cys59, Cys48/Cys66, and Cys60/Cys67. Residue Lys71 is modified to Lysine amide.

This sequence belongs to the penaeidin family.

The protein resides in the cytoplasmic granule. Its function is as follows. Antibacterial and antifungal activity. Presents chitin-binding activity. The chain is Penaeidin-2b from Penaeus vannamei (Whiteleg shrimp).